The sequence spans 359 residues: MNIYDQLQAVEDRYEELGELLSDPDVVSDTRRFMELSKEEASNRDTVIAYREYKQVLQNIVDAEEMIKESGGDADLEEMAKQELKDAKAEKEEYEEKLKILLLPKDPNDDKNIILEIRGAAGGDEAALFAGDLLTMYQKYAEAQGWRFEVMEASMNGVGGFKEVVAMVSGQSVYSKLKYESGAHRVQRVPVTESQGRVHTSTATVLVMPEVEEVEYDIDPKDLRVDIYHASGAGGQNVNKVATAVRIVHLPTNIKVEMQEERTQQKNREKAMKIIRARVADHFAQIAQDEQDAERKSTIGTGDRSERIRTYNFPQNRVTDHRIGLTLQKLDTILSGKLDEVMDALVLYDQTQKLEELNK.

Gln-236 is modified (N5-methylglutamine).

Belongs to the prokaryotic/mitochondrial release factor family. In terms of processing, methylated by PrmC. Methylation increases the termination efficiency of RF1.

It localises to the cytoplasm. Its function is as follows. Peptide chain release factor 1 directs the termination of translation in response to the peptide chain termination codons UAG and UAA. The protein is Peptide chain release factor 1 of Streptococcus pneumoniae (strain Hungary19A-6).